The following is a 514-amino-acid chain: 2,3-bisphosphoglycerate-independent phosphoglycerate mutase (514 aa).

Residues Asp14 and Ser64 each coordinate Mn(2+). Catalysis depends on Ser64, which acts as the Phosphoserine intermediate. Residues His125, 155-156 (RD), Arg187, Arg193, 263-266 (RADR), and Lys336 each bind substrate. Mn(2+)-binding residues include Asp403, His407, Asp444, His445, and His463.

Belongs to the BPG-independent phosphoglycerate mutase family. As to quaternary structure, monomer. Requires Mn(2+) as cofactor.

It catalyses the reaction (2R)-2-phosphoglycerate = (2R)-3-phosphoglycerate. The protein operates within carbohydrate degradation; glycolysis; pyruvate from D-glyceraldehyde 3-phosphate: step 3/5. Functionally, catalyzes the interconversion of 2-phosphoglycerate and 3-phosphoglycerate. This chain is 2,3-bisphosphoglycerate-independent phosphoglycerate mutase, found in Shewanella putrefaciens (strain CN-32 / ATCC BAA-453).